The following is a 138-amino-acid chain: Class I hydrophobin 1 (138 aa).

A signal peptide spans 1-19 (MRFSAATVSALAMALTVAA). Intrachain disulfides connect cysteine 45/cysteine 113, cysteine 53/cysteine 107, cysteine 54/cysteine 91, and cysteine 114/cysteine 131.

It belongs to the fungal hydrophobin family. In terms of assembly, interacts with the lipid droplet coating protein Cap20.

The protein resides in the secreted. It localises to the lipid droplet. In terms of biological role, aerial growth, conidiation, and dispersal of filamentous fungi in the environment rely upon a capability of their secreting small amphipathic proteins called hydrophobins (HPBs) with low sequence identity. Class I can self-assemble into an outermost layer of rodlet bundles on aerial cell surfaces, conferring cellular hydrophobicity that supports fungal growth, development and dispersal; whereas Class II form highly ordered films at water-air interfaces through intermolecular interactions but contribute nothing to the rodlet structure. Hydr1 is a class I hydrophobin involved in spore germination, appressorium formation, but not in the formation of the rodlet layer of conidia. Responsible for the full virulence on rubber tree leaves. The polypeptide is Class I hydrophobin 1 (Colletotrichum siamense (Anthracnose fungus)).